Reading from the N-terminus, the 948-residue chain is MNTHSDFASRHIGPQGEERREMLDSLGYRTLDELIADIVPADIRMKAPLDLPAAKSETEALEELRSILRKNKLLKTFIGQGYYGTITPSVILRNVLENPGWYTAYTPYQPEIAQGRLEMLMNFQTMVSSLTGLPVANASLLDEGTAAAEAVTMCRNARPKANTFFVADTCHPQTISVIRTRAAFQGVNIIVGDCSSFDPASIGADLAGVLVQYPDTLGRICDYTDFFSRVHATGALCVVAADLMALTVIREPGAFGADICIGNTQHFGIPMGFGGPHAAYMSCTDALKRRMPGRLIGMSIDTLGRPAYRLALQTREQHIRRDKATSNICTAQVLLAVLAAFYAVYHGQEGLKRIGTEIHLKTKSLYKALTEAGIAIENKNFFDTLLLSVPGQADAMVQKALEAGYNIRRVDADHAAISLDETATCADIAALASALAGAETSAACDCDAPAWDPVHTRQTPFCTEKAFNSYHSETEMMRYIRRLESRDLALNEAMIPLGSCTMKLNAASEMIPITWPEANSLHPFVPADQSEGIREMLSILSDRLAKITGFAAVSLQPNAGAAGEYAGLLAIRRYQKHAGEGHRNVCLIPTSAHGTNPASSAMAGLKVVPVKCDERGNIDMADLKSQAEAHKDNLSCIMVTYPSTHGVYEQTIKELCDIVHANGGQVYMDGANMNAQVGLTCPGCIGADVCHLNLHKTFAMPHGGGGPGIGPIGVAEHLVPFLPGHLTLGHEEGAVASAAWGSASIAAICWMYLSMMGPDGLREATEMAILNANYIAKKLGHLFPVLYSGNKGLVAHECILDPRQLTHDAGLTVDDIAKRLMDYGFHGPTMSFPVPGTLMVEPTESEPKKELDRFIEAMERIHAEITAIINGTADKEDNVLKNSPHTAEMVSADEWRHPYSRSEAAYPVSGLLIHKFWPYVGRVDNVYGDRNLVCTCDTVEEFSKAVEL.

Lys-696 carries the N6-(pyridoxal phosphate)lysine modification.

It belongs to the GcvP family. The glycine cleavage system is composed of four proteins: P, T, L and H. Requires pyridoxal 5'-phosphate as cofactor.

The enzyme catalyses N(6)-[(R)-lipoyl]-L-lysyl-[glycine-cleavage complex H protein] + glycine + H(+) = N(6)-[(R)-S(8)-aminomethyldihydrolipoyl]-L-lysyl-[glycine-cleavage complex H protein] + CO2. The glycine cleavage system catalyzes the degradation of glycine. The P protein binds the alpha-amino group of glycine through its pyridoxal phosphate cofactor; CO(2) is released and the remaining methylamine moiety is then transferred to the lipoamide cofactor of the H protein. The protein is Glycine dehydrogenase (decarboxylating) of Akkermansia muciniphila (strain ATCC BAA-835 / DSM 22959 / JCM 33894 / BCRC 81048 / CCUG 64013 / CIP 107961 / Muc).